Consider the following 533-residue polypeptide: Probable bifunctional tRNA threonylcarbamoyladenosine biosynthesis protein (533 aa).

Residues 1 to 328 (MRILGIEGTA…FRPDAVTVTW (328 aa)) are kae1. Positions 112 and 116 each coordinate Fe cation. Residues 133-137 (NASGA), aspartate 165, glycine 178, glutamate 182, and asparagine 261 each bind L-threonylcarbamoyladenylate. Fe cation is bound at residue aspartate 289. Positions 339 to 533 (PATLDKTPVR…RDIESRGRYH (195 aa)) constitute a Protein kinase domain. Residues 347–354 (VRGAEAIV) and lysine 363 each bind ATP. Aspartate 452 acts as the Proton acceptor; for kinase activity in catalysis.

This sequence in the N-terminal section; belongs to the KAE1 / TsaD family. The protein in the C-terminal section; belongs to the protein kinase superfamily. Tyr protein kinase family. BUD32 subfamily. As to quaternary structure, component of the KEOPS complex that consists of Kae1, Bud32, Cgi121 and Pcc1; the whole complex dimerizes. The cofactor is Fe(2+).

The protein resides in the cytoplasm. The enzyme catalyses L-seryl-[protein] + ATP = O-phospho-L-seryl-[protein] + ADP + H(+). It carries out the reaction L-threonyl-[protein] + ATP = O-phospho-L-threonyl-[protein] + ADP + H(+). The catalysed reaction is L-threonylcarbamoyladenylate + adenosine(37) in tRNA = N(6)-L-threonylcarbamoyladenosine(37) in tRNA + AMP + H(+). Functionally, required for the formation of a threonylcarbamoyl group on adenosine at position 37 (t(6)A37) in tRNAs that read codons beginning with adenine. Is a component of the KEOPS complex that is probably involved in the transfer of the threonylcarbamoyl moiety of threonylcarbamoyl-AMP (TC-AMP) to the N6 group of A37. The Kae1 domain likely plays a direct catalytic role in this reaction. The Bud32 domain probably displays kinase activity that regulates Kae1 function. This chain is Probable bifunctional tRNA threonylcarbamoyladenosine biosynthesis protein, found in Haloquadratum walsbyi (strain DSM 16790 / HBSQ001).